The primary structure comprises 163 residues: Crossover junction endodeoxyribonuclease RuvC (163 aa).

Residues D4, E65, and D138 contribute to the active site. Residues D4, E65, and D138 each contribute to the Mg(2+) site.

This sequence belongs to the RuvC family. Homodimer which binds Holliday junction (HJ) DNA. The HJ becomes 2-fold symmetrical on binding to RuvC with unstacked arms; it has a different conformation from HJ DNA in complex with RuvA. In the full resolvosome a probable DNA-RuvA(4)-RuvB(12)-RuvC(2) complex forms which resolves the HJ. Mg(2+) is required as a cofactor.

The protein resides in the cytoplasm. It carries out the reaction Endonucleolytic cleavage at a junction such as a reciprocal single-stranded crossover between two homologous DNA duplexes (Holliday junction).. In terms of biological role, the RuvA-RuvB-RuvC complex processes Holliday junction (HJ) DNA during genetic recombination and DNA repair. Endonuclease that resolves HJ intermediates. Cleaves cruciform DNA by making single-stranded nicks across the HJ at symmetrical positions within the homologous arms, yielding a 5'-phosphate and a 3'-hydroxyl group; requires a central core of homology in the junction. The consensus cleavage sequence is 5'-(A/T)TT(C/G)-3'. Cleavage occurs on the 3'-side of the TT dinucleotide at the point of strand exchange. HJ branch migration catalyzed by RuvA-RuvB allows RuvC to scan DNA until it finds its consensus sequence, where it cleaves and resolves the cruciform DNA. The protein is Crossover junction endodeoxyribonuclease RuvC of Corynebacterium jeikeium (strain K411).